The following is a 177-amino-acid chain: Large ribosomal subunit protein uL6 (177 aa).

The protein belongs to the universal ribosomal protein uL6 family. As to quaternary structure, part of the 50S ribosomal subunit.

In terms of biological role, this protein binds to the 23S rRNA, and is important in its secondary structure. It is located near the subunit interface in the base of the L7/L12 stalk, and near the tRNA binding site of the peptidyltransferase center. This is Large ribosomal subunit protein uL6 from Vibrio cholerae serotype O1 (strain ATCC 39541 / Classical Ogawa 395 / O395).